The sequence spans 253 residues: Coenzyme F420:L-glutamate ligase (253 aa).

GTP is bound by residues 9 to 12 (LPEI), 38 to 39 (ST), and Lys43. An a divalent metal cation-binding site is contributed by Asp113. Asn116 lines the GTP pocket. Asp150, Thr151, and Glu208 together coordinate a divalent metal cation. 206 to 213 (SGEGDDGT) lines the GTP pocket.

The protein belongs to the CofE family. As to quaternary structure, homodimer. Mg(2+) serves as cofactor. Mn(2+) is required as a cofactor. It depends on K(+) as a cofactor.

The catalysed reaction is oxidized coenzyme F420-0 + GTP + L-glutamate = oxidized coenzyme F420-1 + GDP + phosphate + H(+). The enzyme catalyses oxidized coenzyme F420-1 + GTP + L-glutamate = oxidized coenzyme F420-2 + GDP + phosphate + H(+). The protein operates within cofactor biosynthesis; coenzyme F420 biosynthesis. Its function is as follows. Catalyzes the GTP-dependent successive addition of two or more gamma-linked L-glutamates to the L-lactyl phosphodiester of 7,8-didemethyl-8-hydroxy-5-deazariboflavin (F420-0) to form coenzyme F420-0-glutamyl-glutamate (F420-2) or polyglutamated F420 derivatives. This is Coenzyme F420:L-glutamate ligase from Halobacterium salinarum (strain ATCC 29341 / DSM 671 / R1).